A 522-amino-acid polypeptide reads, in one-letter code: MIRLYRPQRPPLRAPLRATPSLSLRWRVMLLAMSMVAMVVVLMAFAVYAVISAALYSDIDNQLQSRAQLLIASGSLAADPGKAIEGTAYSDVNAMLVNPGHAIYTAQQPGQTLPVGSPEKAVIHGELFMSRRTAGDQRILAVHLQNGTSLLISKSLKPTEAVMNKLRWVLLIVGGVGVAVAAVAGGMVTRAGLRPVARLTEAAERVARTDDLRPIPVFGSDELARLTESFNLMLRALAESRERQARLVTDAGHELRTPLTSLRTNVELLMASMEPGAPRLPEQEMVELRADVLAQIEELSTLVGDLVDLTRDDAGQVVHEPVDMSDVIDRSLERVRRRRNDIHFDVDVTPWQMYGDAAGLSRAVLNLLDNAAKWSPPGGHVGVTMRQLDPSHVELVVSDHGPGIPPQERRLVFERFYRSTSARAMPGSGLGLAIVKKVVLNHGGMLRVEDTVPGGQPPGTSFYVLLPGRSLPPAGHSTPAGESETDQAEAATDPAVPVAGDTANSRESANVISVDSQSARAR.

Over 1–30 the chain is Cytoplasmic; it reads MIRLYRPQRPPLRAPLRATPSLSLRWRVML. Residues 31 to 51 form a helical membrane-spanning segment; sequence LAMSMVAMVVVLMAFAVYAVI. Over 52-167 the chain is Extracellular; sequence SAALYSDIDN…PTEAVMNKLR (116 aa). The helical transmembrane segment at 168–188 threads the bilayer; that stretch reads WVLLIVGGVGVAVAAVAGGMV. At 189–522 the chain is on the cytoplasmic side; it reads TRAGLRPVAR…SVDSQSARAR (334 aa). An HAMP domain is found at 190–242; sequence RAGLRPVARLTEAAERVARTDDLRPIPVFGSDELARLTESFNLMLRALAESRE. The Histidine kinase domain maps to 250–470; it reads DAGHELRTPL…SFYVLLPGRS (221 aa). A Phosphohistidine; by autocatalysis modification is found at histidine 253. Residues 467–522 are disordered; it reads PGRSLPPAGHSTPAGESETDQAEAATDPAVPVAGDTANSRESANVISVDSQSARAR. Positions 502 to 522 are enriched in polar residues; that stretch reads TANSRESANVISVDSQSARAR.

Mg(2+) is required as a cofactor. Mn(2+) serves as cofactor. Autophosphorylated.

The protein resides in the cell membrane. It catalyses the reaction ATP + protein L-histidine = ADP + protein N-phospho-L-histidine.. Functionally, member of the two-component regulatory system MprB/MprA which contributes to maintaining a balance among several systems involved in stress resistance and is required for establishment and maintenance of persistent infection in the host. In response to environmental signals MprB acts both as a membrane-associated protein kinase that undergoes autophosphorylation and subsequently transfers the phosphate to MprA, and a protein phosphatase that dephosphorylates phospho-MprA. The polypeptide is Signal transduction histidine-protein kinase/phosphatase MprB (mprB) (Mycolicibacterium paratuberculosis (strain ATCC BAA-968 / K-10) (Mycobacterium paratuberculosis)).